The primary structure comprises 230 residues: 2,3-bisphosphoglycerate-dependent phosphoglycerate mutase (230 aa).

Residues 10-17, 23-24, R62, 89-92, K100, 116-117, and 185-186 each bind substrate; these read RHGQSKWN, TG, ERHY, RR, and GN. H11 functions as the Tele-phosphohistidine intermediate in the catalytic mechanism. The active-site Proton donor/acceptor is the E89.

Belongs to the phosphoglycerate mutase family. BPG-dependent PGAM subfamily. In terms of assembly, homodimer.

It catalyses the reaction (2R)-2-phosphoglycerate = (2R)-3-phosphoglycerate. It participates in carbohydrate degradation; glycolysis; pyruvate from D-glyceraldehyde 3-phosphate: step 3/5. In terms of biological role, catalyzes the interconversion of 2-phosphoglycerate and 3-phosphoglycerate. The polypeptide is 2,3-bisphosphoglycerate-dependent phosphoglycerate mutase (Buchnera aphidicola subsp. Schizaphis graminum (strain Sg)).